Here is a 209-residue protein sequence, read N- to C-terminus: Uracil phosphoribosyltransferase (209 aa).

Residues R79, R104, and 131-139 (DPMLATGGS) contribute to the 5-phospho-alpha-D-ribose 1-diphosphate site. Residues I194 and 199–201 (GDA) each bind uracil. 5-phospho-alpha-D-ribose 1-diphosphate is bound at residue D200.

The protein belongs to the UPRTase family. Mg(2+) serves as cofactor.

It catalyses the reaction UMP + diphosphate = 5-phospho-alpha-D-ribose 1-diphosphate + uracil. It functions in the pathway pyrimidine metabolism; UMP biosynthesis via salvage pathway; UMP from uracil: step 1/1. Allosterically activated by GTP. Catalyzes the conversion of uracil and 5-phospho-alpha-D-ribose 1-diphosphate (PRPP) to UMP and diphosphate. In Francisella tularensis subsp. novicida (strain U112), this protein is Uracil phosphoribosyltransferase.